Here is a 350-residue protein sequence, read N- to C-terminus: Uroporphyrinogen decarboxylase (350 aa).

Residues 27-31 (RQAGR), F46, D76, Y152, S207, and H321 each bind substrate.

This sequence belongs to the uroporphyrinogen decarboxylase family. In terms of assembly, homodimer.

Its subcellular location is the cytoplasm. The catalysed reaction is uroporphyrinogen III + 4 H(+) = coproporphyrinogen III + 4 CO2. Its pathway is porphyrin-containing compound metabolism; protoporphyrin-IX biosynthesis; coproporphyrinogen-III from 5-aminolevulinate: step 4/4. In terms of biological role, catalyzes the decarboxylation of four acetate groups of uroporphyrinogen-III to yield coproporphyrinogen-III. The polypeptide is Uroporphyrinogen decarboxylase (Listeria welshimeri serovar 6b (strain ATCC 35897 / DSM 20650 / CCUG 15529 / CIP 8149 / NCTC 11857 / SLCC 5334 / V8)).